A 401-amino-acid chain; its full sequence is MGRAKKVVLAYSGGVDTSVCIPYLKHEWGVDEVITFAADLGQGDELDPIRLKALDAGASQSLVGDLIEPFVEEFALPAIRANALYEGRYPLSTALARPLIARRLVEVAREVGADAVAHGCTGKGNDQVRFDLAIAALAPDLKVLTPAREWSMSREEAIAYGERCGIPAPVSKKSPYSIDLNLLGRSIEAGPLEDPMVAPPEEVFAMTSSIDAAPSQAQDIEIRFEAGNPVAIDGVRLDSVGLIKEANRLAGRHGFGRLDIIENRVVGIKSREIYETPGLLLLIRAHQELESLTLAADVLRMKRQLEMQWAELVYQGLWFSPLKDALDGFMDRTQIYVNGLVRIRLHKGNAMVIGRSSDTNSLYISEMATYGSEDNFDHRAAEGFIYIWGLPSRLWAAARRG.

ATP is bound by residues 10 to 18 (AYSGGVDTS) and A38. Y89 is an L-citrulline binding site. G119 contributes to the ATP binding site. T121, N125, and D126 together coordinate L-aspartate. N125 contacts L-citrulline. R129, S177, S186, E262, and Y274 together coordinate L-citrulline.

Belongs to the argininosuccinate synthase family. Type 1 subfamily. As to quaternary structure, homotetramer.

The protein localises to the cytoplasm. It catalyses the reaction L-citrulline + L-aspartate + ATP = 2-(N(omega)-L-arginino)succinate + AMP + diphosphate + H(+). It participates in amino-acid biosynthesis; L-arginine biosynthesis; L-arginine from L-ornithine and carbamoyl phosphate: step 2/3. The protein is Argininosuccinate synthase of Prochlorococcus marinus (strain MIT 9303).